We begin with the raw amino-acid sequence, 210 residues long: MADAKELKQVLIGPIVSNNPIALQILGVCSALAVTSKMETALVMTIALTAVCALSNLFISLIRNHIPSSVRIIVQMTIIASLVIVVDQVLQAYAYDVAKQLSVFVGLIITNCIVMGRAEAYAMKTPPMMSFMDGIGNGLGYGAILLSVGFVRELFGNGSLFGIEILSKISDGGWYQPNGLLLLPPSAFFLIGALIWIIRVMKPEQVEAKG.

A run of 6 helical transmembrane segments spans residues 10–30, 42–62, 72–92, 103–123, 131–151, and 178–198; these read VLIG…GVCS, LVMT…ISLI, IIVQ…VLQA, VFVG…AYAM, FMDG…VGFV, and NGLL…IWII.

This sequence belongs to the NqrDE/RnfAE family. In terms of assembly, composed of six subunits; NqrA, NqrB, NqrC, NqrD, NqrE and NqrF.

Its subcellular location is the cell inner membrane. The enzyme catalyses a ubiquinone + n Na(+)(in) + NADH + H(+) = a ubiquinol + n Na(+)(out) + NAD(+). Its function is as follows. NQR complex catalyzes the reduction of ubiquinone-1 to ubiquinol by two successive reactions, coupled with the transport of Na(+) ions from the cytoplasm to the periplasm. NqrA to NqrE are probably involved in the second step, the conversion of ubisemiquinone to ubiquinol. The sequence is that of Na(+)-translocating NADH-quinone reductase subunit D from Shewanella pealeana (strain ATCC 700345 / ANG-SQ1).